The chain runs to 105 residues: uncharacterized protein (105 aa).

Low complexity predominate over residues S31 to V47. Positions S31–P80 are disordered. Positions I54–A66 are enriched in basic and acidic residues.

This is an uncharacterized protein from Caenorhabditis elegans.